The sequence spans 319 residues: ATP-dependent 6-phosphofructokinase (319 aa).

ATP is bound at residue Gly-11. ADP is bound at residue 21–25; that stretch reads RAVVR. Residues 72 to 73 and 102 to 105 each bind ATP; these read RC and GDGS. Asp-103 serves as a coordination point for Mg(2+). 125-127 contributes to the substrate binding site; the sequence is TID. Residue Asp-127 is the Proton acceptor of the active site. An ADP-binding site is contributed by Arg-154. Residues Arg-162 and 169 to 171 contribute to the substrate site; that span reads MGR. Residues 185-187, Arg-211, and 213-215 each bind ADP; these read GAE and KKH. Substrate-binding positions include Glu-222, Arg-243, and 249 to 252; that span reads HIQR.

It belongs to the phosphofructokinase type A (PFKA) family. ATP-dependent PFK group I subfamily. Prokaryotic clade 'B1' sub-subfamily. Homotetramer. Component of a possible RNA degradosome complex composed of rny, rnjA, rnjB, pnp, pfkA and eno (although rnjA and rnjB's presence is unclear). Specifically interacts with RNase Y (rny, PubMed:21803996) and enolase (eno, PubMed:22198292). Interacts with BrxC. The cofactor is Mg(2+).

The protein resides in the cytoplasm. The enzyme catalyses beta-D-fructose 6-phosphate + ATP = beta-D-fructose 1,6-bisphosphate + ADP + H(+). It participates in carbohydrate degradation; glycolysis; D-glyceraldehyde 3-phosphate and glycerone phosphate from D-glucose: step 3/4. With respect to regulation, allosterically activated by ADP and other diphosphonucleosides, and allosterically inhibited by phosphoenolpyruvate. In terms of biological role, catalyzes the phosphorylation of D-fructose 6-phosphate to fructose 1,6-bisphosphate by ATP, the first committing step of glycolysis. The polypeptide is ATP-dependent 6-phosphofructokinase (Bacillus subtilis (strain 168)).